Consider the following 240-residue polypeptide: MTRYTYLFILQIISCSFAATWVKITKPTITWEDMEVSLEGEKKFFCGEFDSSFTGRYHWRFNGSSILPERTQIHRNQFVFLAGANAIRNQLPGEYECCVRETLGNACYSRMIVVQNRTDNHNIDMTNSTLLLADEGNTYYIRMHDVKRVEGVKCTLDGVNVDNFKYPFLGRQTKKTVPYHLKIENIERGGEVNCDLRLHKKEIVQKTFDIRLLRGFISSSQLPQFVYLIVFTIIGYILRL.

Residues 1-18 (MTRYTYLFILQIISCSFA) form the signal peptide. A glycan (N-linked (GlcNAc...) asparagine) is linked at Asn-127. The helical transmembrane segment at 215 to 235 (GFISSSQLPQFVYLIVFTIIG) threads the bilayer.

It is found in the membrane. This is an uncharacterized protein from Caenorhabditis elegans.